The following is a 440-amino-acid chain: Xylose isomerase (440 aa).

Active-site residues include H101 and D104. The Mg(2+) site is built by E232, E268, H271, D296, D307, D309, and D339.

This sequence belongs to the xylose isomerase family. As to quaternary structure, homotetramer. Mg(2+) is required as a cofactor.

The protein localises to the cytoplasm. It catalyses the reaction alpha-D-xylose = alpha-D-xylulofuranose. The chain is Xylose isomerase from Escherichia coli (strain SMS-3-5 / SECEC).